The chain runs to 447 residues: Acid phosphatase (447 aa).

An N-terminal signal peptide occupies residues 1 to 17 (MKPSVATLLATVSLVYA). Asparagine 119, asparagine 150, asparagine 177, asparagine 186, and asparagine 208 each carry an N-linked (GlcNAc...) asparagine glycan. Aspartate 215 functions as the Proton donor in the catalytic mechanism. 7 N-linked (GlcNAc...) asparagine glycosylation sites follow: asparagine 217, asparagine 234, asparagine 240, asparagine 315, asparagine 332, asparagine 382, and asparagine 405. Residue serine 419 is the site of GPI-like-anchor amidated serine attachment. Positions 420–447 (ASSNAAVSAVAPAAGVSGLLLGLALNLL) are cleaved as a propeptide — removed in mature form.

Post-translationally, the GPI-like anchor contains a phosphoceramide lipid group. The anchor position has not been determined.

It is found in the cell membrane. The catalysed reaction is a phosphate monoester + H2O = an alcohol + phosphate. Inhibited by NaF, molybdate and vanadate. Functionally, has both phosphomonoesterase and phosphodiesterase activity. Cleaves a broad range of phosphate esters. This Aspergillus fumigatus (strain ATCC MYA-4609 / CBS 101355 / FGSC A1100 / Af293) (Neosartorya fumigata) protein is Acid phosphatase (phoA).